The chain runs to 1127 residues: E3 ubiquitin-protein ligase TRIM33 (1127 aa).

Gly residues predominate over residues 1 to 18 (MAENKGGGEAESGGGGSG). The tract at residues 1-118 (MAENKGGGEA…PSAGPPPGPP (118 aa)) is disordered. Positions 1–147 (MAENKGGGEA…AEPKLLPCLH (147 aa)) are necessary for E3 ubiquitin-protein ligase activity and repression of SMAD4 signaling and transcriptional repression. Residues 19–37 (SAPVTAGAAGPAAQEAEPP) show a composition bias toward low complexity. Residues 52 to 64 (RAGAEGGAAGPDD) are compositionally biased toward gly residues. A compositionally biased stretch (low complexity) spans 65-97 (GGVAAASSGSAQAASSPAASVGTGVAGGAVSTP). Positions 98 to 118 (APAPASAPAPGPSAGPPPGPP) are enriched in pro residues. The RING-type zinc-finger motif lies at 125–154 (CAVCQQSLQSRREAEPKLLPCLHSFCLRCL). 2 consecutive B box-type zinc fingers follow at residues 212 to 259 (KSEQ…IRKK) and 271 to 312 (QRPV…YQFL). Residues C217, C220, C241, H245, C276, H279, C299, and H304 each contribute to the Zn(2+) site. Positions 299-401 (CQLLEHKEHR…QMKLLQQQND (103 aa)) are necessary for oligomerization. Residues 299-401 (CQLLEHKEHR…QMKLLQQQND (103 aa)) are a coiled coil. Residues K329, K334, K481, and K504 each participate in a glycyl lysine isopeptide (Lys-Gly) (interchain with G-Cter in SUMO2) cross-link. R515 carries the asymmetric dimethylarginine; alternate modification. R515 carries the post-translational modification Omega-N-methylarginine; alternate. K527 participates in a covalent cross-link: Glycyl lysine isopeptide (Lys-Gly) (interchain with G-Cter in SUMO2). R535 carries the post-translational modification Omega-N-methylarginine. Positions 536-563 (MQQPPAPVPTTTTTTQQHPRQAAPQMLQ) are disordered. At R577 the chain carries Asymmetric dimethylarginine. R591 carries the asymmetric dimethylarginine; alternate modification. R591 is modified (omega-N-methylarginine; alternate). R598 and R604 each carry asymmetric dimethylarginine. 3 disordered regions span residues 608–629 (PQYS…HAGP), 673–692 (NPEN…EDAG), and 703–818 (YISG…TPPL). The span at 723–759 (PSALSPGSSGLSNSHTPVRPPSTSSTGSRGSCGSSGR) shows a compositional bias: low complexity. An N6-acetyllysine; alternate mark is found at K763 and K769. Glycyl lysine isopeptide (Lys-Gly) (interchain with G-Cter in SUMO2); alternate cross-links involve residues K763 and K769. Residue K774 forms a Glycyl lysine isopeptide (Lys-Gly) (interchain with G-Cter in SUMO2) linkage. Glycyl lysine isopeptide (Lys-Gly) (interchain with G-Cter in SUMO2); alternate cross-links involve residues K776 and K793. Glycyl lysine isopeptide (Lys-Gly) (interchain with G-Cter in SUMO1); alternate cross-links involve residues K776 and K793. At K793 the chain carries N6-acetyllysine; alternate. Residues 793-802 (KQEKTEDGRR) are compositionally biased toward basic and acidic residues. K796 participates in a covalent cross-link: Glycyl lysine isopeptide (Lys-Gly) (interchain with G-Cter in SUMO2). S803 bears the Phosphoserine mark. Positions 807-818 (LSSPESSLTPPL) are enriched in low complexity. T815 carries the post-translational modification Phosphothreonine. A Glycyl lysine isopeptide (Lys-Gly) (interchain with G-Cter in SUMO2) cross-link involves residue K861. S862 bears the Phosphoserine mark. A PHD-type zinc finger spans residues 887-934 (EDWCAVCQNGGDLLCCEKCPKVFHLTCHVPTLLSFPSGDWICTFCRDI). N6-acetyllysine is present on K951. K953 bears the N6-acetyllysine; alternate mark. K953 is covalently cross-linked (Glycyl lysine isopeptide (Lys-Gly) (interchain with G-Cter in SUMO2); alternate). Residues 957-1080 (GLSPVDQRKC…LYFEDKLTEI (124 aa)) enclose the Bromo domain. Glycyl lysine isopeptide (Lys-Gly) (interchain with G-Cter in SUMO2) cross-links involve residues K1007 and K1043. T1051 is modified (phosphothreonine). K1057 participates in a covalent cross-link: Glycyl lysine isopeptide (Lys-Gly) (interchain with G-Cter in SUMO2). Positions 1088–1127 (PLPEFEQEEDDGEVTEDSDEDFIQPRRKRLKSDERPVHIK) are disordered. Positions 1092–1109 (FEQEEDDGEVTEDSDEDF) are enriched in acidic residues. Phosphothreonine is present on T1102. S1105 carries the phosphoserine modification. A Glycyl lysine isopeptide (Lys-Gly) (interchain with G-Cter in SUMO2) cross-link involves residue K1118. A compositionally biased stretch (basic and acidic residues) spans 1118-1127 (KSDERPVHIK). S1119 is subject to Phosphoserine.

This sequence belongs to the TRIM/RBCC family. As to quaternary structure, homooligomer and heterooligomer with TRIM24 and TRIM28 family members. Interacts with SMAD4 in unstimulated cells. Found in a complex with SMAD2 and SMAD3 upon addition of TGF-beta. Interacts with SMAD2 and SMAD3. Interacts with SMAD4 under basal and induced conditions and, upon TGF-beta signaling, with activated SMAD2. Forms a ternary complex with SMAD4 and SMAD2 upon TGF-beta signaling. In terms of processing, sumoylated with SUMO1. In terms of tissue distribution, expressed in stem cells at the bottom of the crypts of the colon (at protein level). Expressed in colon adenomas and adenocarcinomas (at protein level). Expressed in brain, lung, liver, spleen, thymus, prostate, kidney, testis, heart, placenta, pancreas, small intestine, ovary, colon, skeletal muscle and hematopoietic progenitors.

It is found in the nucleus. It catalyses the reaction S-ubiquitinyl-[E2 ubiquitin-conjugating enzyme]-L-cysteine + [acceptor protein]-L-lysine = [E2 ubiquitin-conjugating enzyme]-L-cysteine + N(6)-ubiquitinyl-[acceptor protein]-L-lysine.. It participates in protein modification; protein ubiquitination. In terms of biological role, acts as an E3 ubiquitin-protein ligase. Promotes SMAD4 ubiquitination, nuclear exclusion and degradation via the ubiquitin proteasome pathway. According to PubMed:16751102, does not promote a decrease in the level of endogenous SMAD4. May act as a transcriptional repressor. Inhibits the transcriptional response to TGF-beta/BMP signaling cascade. Plays a role in the control of cell proliferation. Its association with SMAD2 and SMAD3 stimulates erythroid differentiation of hematopoietic stem/progenitor. Monoubiquitinates SMAD4 and acts as an inhibitor of SMAD4-dependent TGF-beta/BMP signaling cascade (Monoubiquitination of SMAD4 hampers its ability to form a stable complex with activated SMAD2/3 resulting in inhibition of TGF-beta/BMP signaling cascade). The polypeptide is E3 ubiquitin-protein ligase TRIM33 (TRIM33) (Homo sapiens (Human)).